The sequence spans 319 residues: Acetyl-coenzyme A carboxylase carboxyl transferase subunit alpha (319 aa).

The region spanning 35 to 296 is the CoA carboxyltransferase C-terminal domain; it reads DLDKEIEQLE…KATLLRQLAE (262 aa).

This sequence belongs to the AccA family. In terms of assembly, acetyl-CoA carboxylase is a heterohexamer composed of biotin carboxyl carrier protein (AccB), biotin carboxylase (AccC) and two subunits each of ACCase subunit alpha (AccA) and ACCase subunit beta (AccD).

The protein localises to the cytoplasm. It catalyses the reaction N(6)-carboxybiotinyl-L-lysyl-[protein] + acetyl-CoA = N(6)-biotinyl-L-lysyl-[protein] + malonyl-CoA. It participates in lipid metabolism; malonyl-CoA biosynthesis; malonyl-CoA from acetyl-CoA: step 1/1. Component of the acetyl coenzyme A carboxylase (ACC) complex. First, biotin carboxylase catalyzes the carboxylation of biotin on its carrier protein (BCCP) and then the CO(2) group is transferred by the carboxyltransferase to acetyl-CoA to form malonyl-CoA. This is Acetyl-coenzyme A carboxylase carboxyl transferase subunit alpha from Vibrio vulnificus (strain CMCP6).